The sequence spans 156 residues: DNA mismatch endonuclease Vsr (156 aa).

Asp-51 and Thr-63 together coordinate Mg(2+).

Belongs to the Vsr family. Mg(2+) is required as a cofactor. The cofactor is Zn(2+).

In terms of biological role, deamination of 5-methylcytosine in DNA results in T/G mismatches. If unrepaired, these mismatches can lead to C-to-T transition mutations. The very short patch (VSP) repair process in E.coli counteracts the mutagenic process by repairing the mismatches in favor of the G-containing strand. This enzyme is an endonuclease that nicks double-stranded DNA within the sequence CT(AT)GN or NT(AT)GG next to the thymidine residue that is mismatched to 2'-deoxyguanosine. The incision is mismatch-dependent and strand-specific. The chain is DNA mismatch endonuclease Vsr from Escherichia coli (strain K12).